Reading from the N-terminus, the 601-residue chain is MSFALKTIYSPSPATTRGKPVVLGGDPKGNNFLYTCGNAVIIRNIKNPNQADIYYEHAQPATVAKYAPSGFYIASGDLSGTLRIWDTTQLEHPLKIELKVLSGPIADIAWSADSQRLVVVGDGKERFGAAILWDSGASVGEITGHSKAIASCDFKATRPFRVITGAEDFQANWFEGPPFKFKHAFKEHTRFLTCVRFSPDGEKVLTVGLDKKGFILDGKTGEKVGALAGGADAHALGIYSCSWSPDSKKVLTVSADKSAKIWDDKGTLLTTFAFEGGVESQLLGSLWQGDTLLAVNLNGDIFSLDQNNPKTPARTLKGHNKLVTSLAFDTASKALYSGSYDGVILQWNLETGIAVPIAGTGHTSSVTQAVVQGNKLVSVSVDDTTRFTPLNPPQYAAQGAKLDSQPQSVAVAQGKDIAVVVTLNSVVVLQGEKVASTTAVKYQPTVVRVSVDGSEVAVGAKDNSIHIYSLSGTTLSEQAVLSGHRGFLTAIAYSPDGKHFASADQNRDIFVWDKASRKIKVEGWVYHNARVTSLAWNSNSNNIVTGSLDSHVYVWSVSEPSKHIAIKNAHRGGVNAVLWVDEHTVASAGLDCSIKTWTIKN.

WD repeat units lie at residues 56–95, 100–143, 145–184, 187–226, 233–272, 318–357, 435–478, 483–522, 526–565, and 569–600; these read EHAQ…HPLK, VLSG…GEIT, HSKA…FKHA, EHTR…KVGA, AHAL…LTTF, GHNK…AVPI, ASTT…LSEQ, GHRG…IKVE, YHNA…KHIA, and AHRG…WTIK.

Belongs to the WD repeat AIP1 family.

Its function is as follows. Associated with the process of cyst formation. In Physarum polycephalum (Slime mold), this protein is 66 kDa stress protein.